The primary structure comprises 398 residues: Probable purine permease 17 (398 aa).

The segment at 1–26 (MEMSKASKQTTRHEESEHVQNPEPDQ) is disordered. The span at 11-20 (TRHEESEHVQ) shows a compositional bias: basic and acidic residues. Residue serine 29 is modified to Phosphoserine. 10 consecutive transmembrane segments (helical) span residues 43-63 (ISVSLCLFLVLLGDSLVMLLL), 88-108 (WTQALIQNAAFPILIPLFFIF), 127-147 (LFFLYLSLGVLVAAHSKLFAL), 155-175 (GIFSLISTTQLIFTAVLTAII), 183-203 (WIIISILLTIVIYVLGTPDFG), 219-239 (WLAFSATIAFSLSLCLIQLGF), 258-278 (VLEMQICVAFVASVVCLVGLF), 301-321 (VLSLVGLALSWQVWAVGMIGL), 332-352 (VVHMCASPFVALFVVLAFDFM), and 355-375 (VFSWPRIGALIGTVLALGSYF).

The protein belongs to the purine permeases (TC 2.A.7.14) family.

The protein resides in the membrane. The chain is Probable purine permease 17 (PUP17) from Arabidopsis thaliana (Mouse-ear cress).